We begin with the raw amino-acid sequence, 21 residues long: Thioredoxin (21 aa).

Lys3 bears the N6-acetyllysine mark. At Lys8 the chain carries N6-succinyllysine.

The protein belongs to the thioredoxin family. In terms of assembly, homodimer; disulfide-linked. Interacts with TXNIP through the redox-active site. Interacts with MAP3K5 and CASP3. Interacts with APEX1; the interaction stimulates the FOS/JUN AP-1 DNA-binding activity in a redox-dependent manner.

It localises to the nucleus. It is found in the cytoplasm. The protein resides in the secreted. Participates in various redox reactions through the reversible oxidation of its active center dithiol to a disulfide and catalyzes dithiol-disulfide exchange reactions. Plays a role in the reversible S-nitrosylation of cysteine residues in target proteins, and thereby contributes to the response to intracellular nitric oxide. Nitrosylates the active site Cys of CASP3 in response to nitric oxide (NO), and thereby inhibits caspase-3 activity. Induces the FOS/JUN AP-1 DNA binding activity in ionizing radiation (IR) cells through its oxidation/reduction status and stimulates AP-1 transcriptional activity. This Canis lupus familiaris (Dog) protein is Thioredoxin (TXN).